We begin with the raw amino-acid sequence, 112 residues long: Putative pterin-4-alpha-carbinolamine dehydratase (112 aa).

Belongs to the pterin-4-alpha-carbinolamine dehydratase family.

It carries out the reaction (4aS,6R)-4a-hydroxy-L-erythro-5,6,7,8-tetrahydrobiopterin = (6R)-L-erythro-6,7-dihydrobiopterin + H2O. The protein is Putative pterin-4-alpha-carbinolamine dehydratase of Hahella chejuensis (strain KCTC 2396).